The sequence spans 131 residues: Small ribosomal subunit protein uS11 (131 aa).

This sequence belongs to the universal ribosomal protein uS11 family. In terms of assembly, part of the 30S ribosomal subunit. Interacts with proteins S7 and S18. Binds to IF-3.

Located on the platform of the 30S subunit, it bridges several disparate RNA helices of the 16S rRNA. Forms part of the Shine-Dalgarno cleft in the 70S ribosome. The chain is Small ribosomal subunit protein uS11 from Syntrophotalea carbinolica (strain DSM 2380 / NBRC 103641 / GraBd1) (Pelobacter carbinolicus).